An 878-amino-acid chain; its full sequence is Probable LRR receptor-like serine/threonine-protein kinase MEE39 (878 aa).

Residues Met-1–Gly-25 form the signal peptide. Residues Gln-26–Val-514 are Extracellular-facing. Residues Asn-183, Asn-203, Asn-235, Asn-290, Asn-404, Asn-418, Asn-445, and Asn-466 are each glycosylated (N-linked (GlcNAc...) asparagine). LRR repeat units follow at residues Arg-413–Ala-436, His-437–Thr-458, and Ser-461–Arg-483. Residues Lys-515–Phe-535 traverse the membrane as a helical segment. Topologically, residues Lys-536–Arg-878 are cytoplasmic. Residue Thr-557 is modified to Phosphothreonine. The region spanning Lys-566–Leu-840 is the Protein kinase domain. ATP contacts are provided by residues Leu-572–Val-580 and Lys-594. Residue Tyr-639 is modified to Phosphotyrosine. Asp-691 functions as the Proton acceptor in the catalytic mechanism. Phosphoserine is present on Ser-726. 2 positions are modified to phosphothreonine: Thr-727 and Thr-732. Position 740 is a phosphotyrosine (Tyr-740). Residues Arg-849–Phe-869 are compositionally biased toward polar residues. Residues Arg-849 to Arg-878 are disordered.

Belongs to the protein kinase superfamily. Ser/Thr protein kinase family.

The protein resides in the membrane. It carries out the reaction L-seryl-[protein] + ATP = O-phospho-L-seryl-[protein] + ADP + H(+). It catalyses the reaction L-threonyl-[protein] + ATP = O-phospho-L-threonyl-[protein] + ADP + H(+). Its function is as follows. Receptor-like serine/threonine-kinase required during the endosperm development in seeds. The polypeptide is Probable LRR receptor-like serine/threonine-protein kinase MEE39 (MEE39) (Arabidopsis thaliana (Mouse-ear cress)).